The following is a 681-amino-acid chain: Proton channel OTOP3 (681 aa).

The span at 1–25 (MLSKEEPACRQFHSREKTWGNEHNG) shows a compositional bias: basic and acidic residues. The tract at residues 1–26 (MLSKEEPACRQFHSREKTWGNEHNGK) is disordered. Over 1-112 (MLSKEEPACR…LHQRAKKTGR (112 aa)) the chain is Cytoplasmic. A helical transmembrane segment spans residues 113 to 133 (LFSGLFGLNLMFLGGTVVSSV). The Extracellular portion of the chain corresponds to 134 to 143 (ALSNKAVPER). Residues 144-166 (DSQSFLCILMLLSSVWALYHLLF) form a helical membrane-spanning segment. Residues 167 to 182 (IRNQNGAVHHDHHAGA) are Cytoplasmic-facing. Residues 183–204 (MWLKASLAIFGVCSIILSIFEI) traverse the membrane as a helical segment. Over 205–216 (GHALLLQNCEIL) the chain is Extracellular. A helical membrane pass occupies residues 217 to 240 (MDIVFFSIEIVFVSVQTVLLWVSC). Residues 241-248 (KDCVQMHH) are Cytoplasmic-facing. The chain crosses the membrane as a helical span at residues 249–271 (SVTRYGIMLTLATDILLWLTAVI). Residues 272–317 (DDSLEQDLEILQSNSTQDESNEMAQCQCPTDSMCWGLKQGYVTMFP) lie on the Extracellular side of the membrane. A helical membrane pass occupies residues 318–334 (FNIEYSLICATLLFIMW). At 335–358 (KNVGRREKLHSDPPRHTFQLRGII) the chain is on the cytoplasmic side. The chain crosses the membrane as a helical span at residues 359–378 (YGPLIGGAALLVGISVFVQY). Residues 379 to 392 (QVEATSGMVSILSY) are Extracellular-facing. Residues 393-415 (HMYYGYKMIILAPMIVCSVAGII) form a helical membrane-spanning segment. At 416–507 (AHSLREKEKK…QGKMKNYTRK (92 aa)) the chain is on the cytoplasmic side. A helical transmembrane segment spans residues 508 to 529 (LDVTLLFVSAVGQLGISYFSII). The Extracellular segment spans residues 530-540 (ATVVTTPWTML). The helical transmembrane segment at 541–563 (SALNFSNSLLLILQYLSQTMFII) threads the bilayer. The Cytoplasmic portion of the chain corresponds to 564-614 (ESMRSIHEEEKEKPGHHEESHRRMSVQEMHKAPPSCLDAGHLGLSRRVVKE). The chain crosses the membrane as a helical span at residues 615–632 (MAMFLMICNIMCWILGAF). Topologically, residues 633 to 651 (GAHPLYMNGLERQLYGSGI) are extracellular. Residues 652 to 674 (WLAILNIGLPLSVFYRMHSVGIL) traverse the membrane as a helical segment. Over 675-681 (LEVYLHA) the chain is Cytoplasmic.

This sequence belongs to the otopetrin family. In terms of assembly, homodimer.

Its subcellular location is the cell membrane. It catalyses the reaction H(+)(in) = H(+)(out). PH regulates the proton channel activity from both sides of the plasma membrane. Low pH activates the channel from the extracellular side but inactivates the channel on the intracellular side. Zn(2+) and Ca(2+) can partially block the channel. Proton-selective channel gated by extracellular protons. The sequence is that of Proton channel OTOP3 (otop3) from Xenopus tropicalis (Western clawed frog).